The sequence spans 1576 residues: eIF-2-alpha kinase GCN2 (1576 aa).

In terms of domain architecture, RWD spans 16-127 (NEIEALKAIF…SIVQDYLNDW (112 aa)). The segment at 180–204 (QDELQRRSYETPQSSSKKKTNSKET) is disordered. 2 consecutive Protein kinase domains span residues 235–511 (VLPL…HVIR) and 556–928 (FEEL…EEFI). ATP-binding positions include 562 to 570 (LGRGGFGEV) and Lys585. Residues 673 to 714 (YNSSADEEDPEASDISFQYSNTSDKEGSSDKDSSIEEASSVK) are disordered. Over residues 695–706 (SDKEGSSDKDSS) the composition is skewed to basic and acidic residues. Asp772 serves as the catalytic Proton acceptor.

The protein belongs to the protein kinase superfamily. Ser/Thr protein kinase family. GCN2 subfamily. Homodimer; homodimerization is important for kinase activation by uncharged tRNAs. Interacts (via N-terminal RWD domain) with gcn1 (via N- and C-terminus); this interaction stimulates gcn2 kinase activity in a gcn20-dependent manner in response to amino acid starvation. Interacts (via N-terminus) with the gcn1-gcn20 complex on translating ribosomes in amino acid-starved cells; gcn1 may bind near the ribosomal A-site and promotes the transfer of uncharged tRNAs from the A-site to the tRNA-binding domain in gcn2 for its subsequent kinase activation, and hence allowing fil1 translational activation and derepression of amino acid biosynthetic genes. In terms of processing, autophosphorylated.

Its subcellular location is the cytoplasm. The enzyme catalyses L-seryl-[protein] + ATP = O-phospho-L-seryl-[protein] + ADP + H(+). The catalysed reaction is L-threonyl-[protein] + ATP = O-phospho-L-threonyl-[protein] + ADP + H(+). With respect to regulation, the integrated stress response (ISR) is activated in response to conditions that promote ribosome collisions: gcn1, which acts as a ribosome collision sensor, activates gcn2. The RQC pathway and the integrated stress response (ISR) antagonize each other: hel2 prevents the activation of gcn2, while gcn2 suppresses RQC activation. Ribosome stalling-induced integrated stress response prefers ribosomes with empty A sites. The kinase activity is stimulated upon binding to uncharged tRNAs. Its function is as follows. Metabolic-stress sensing protein kinase that phosphorylates the alpha subunit of eukaryotic translation initiation factor 2 (eIF-2-alpha/SUI2) on 'Ser-52' in response to low amino acid, carbon, or purine availability. Required for adapatation to nutrient starvation by acting as a key component of the integrated stress response (ISR), by which cells alter their translational and transcriptional output in response to starvation. Converts phosphorylated eIF-2-alpha/SUI2 either to a competitive inhibitor of translation initiation factor eIF-2B, leading to a global protein synthesis repression, and thus to a reduced overall utilization of amino acids, or to a translational initiation activation of specific mRNAs, such as the transcriptional activator GCN4, and hence allowing GCN4-mediated reprogramming of transcription to alleviate nutrient depletion. Binds uncharged tRNAs. The polypeptide is eIF-2-alpha kinase GCN2 (Schizosaccharomyces pombe (strain 972 / ATCC 24843) (Fission yeast)).